A 447-amino-acid polypeptide reads, in one-letter code: Protein mab-21-like 4 (447 aa).

The polypeptide is Protein mab-21-like 4 (Homo sapiens (Human)).